A 111-amino-acid chain; its full sequence is Integration host factor subunit alpha (111 aa).

The protein belongs to the bacterial histone-like protein family. As to quaternary structure, heterodimer of an alpha and a beta chain.

In terms of biological role, this protein is one of the two subunits of integration host factor, a specific DNA-binding protein that functions in genetic recombination as well as in transcriptional and translational control. This chain is Integration host factor subunit alpha, found in Chelativorans sp. (strain BNC1).